The following is an 828-amino-acid chain: Periplasmic nitrate reductase (828 aa).

Positions 1-31 (MKLSRRHFMKANAVAAAAAVAGITIPIAVRA) form a signal peptide, tat-type signal. The 4Fe-4S Mo/W bis-MGD-type domain occupies 39 to 95 (IHWDKAPCRFCGVGCGVLVGTQNGRIVASQGDPDAPVNRGLNCIKGYFLPKIMYGQD). Residues cysteine 46, cysteine 49, cysteine 53, and cysteine 81 each contribute to the [4Fe-4S] cluster site. Residues lysine 83, glutamine 150, asparagine 175, cysteine 179, 212–219 (WGSNMAEM), 243–247 (STYQH), 262–264 (QTD), methionine 372, glutamine 376, asparagine 482, 508–509 (SD), lysine 531, aspartate 558, and 718–727 (TGRVLEHWHT) each bind Mo-bis(molybdopterin guanine dinucleotide). Substrate is bound at residue phenylalanine 794. 2 residues coordinate Mo-bis(molybdopterin guanine dinucleotide): asparagine 802 and lysine 819.

Belongs to the prokaryotic molybdopterin-containing oxidoreductase family. NasA/NapA/NarB subfamily. As to quaternary structure, component of the periplasmic nitrate reductase NapAB complex composed of NapA and NapB. The cofactor is [4Fe-4S] cluster. It depends on Mo-bis(molybdopterin guanine dinucleotide) as a cofactor. Post-translationally, predicted to be exported by the Tat system. The position of the signal peptide cleavage has not been experimentally proven.

It localises to the periplasm. It carries out the reaction 2 Fe(II)-[cytochrome] + nitrate + 2 H(+) = 2 Fe(III)-[cytochrome] + nitrite + H2O. Its function is as follows. Catalytic subunit of the periplasmic nitrate reductase complex NapAB. Receives electrons from NapB and catalyzes the reduction of nitrate to nitrite. The protein is Periplasmic nitrate reductase of Pectobacterium carotovorum subsp. carotovorum (strain PC1).